Consider the following 274-residue polypeptide: Oxidoreductase BOA17 (274 aa).

5 residues coordinate NADP(+): leucine 14, threonine 32, aspartate 57, asparagine 84, and lysine 117. Residues serine 135 and tyrosine 149 each act as proton donor in the active site. 4 residues coordinate NADP(+): tyrosine 149, lysine 153, isoleucine 182, and threonine 184. Lysine 153 acts as the Lowers pKa of active site Tyr in catalysis.

This sequence belongs to the short-chain dehydrogenases/reductases (SDR) family.

The protein operates within polyketide biosynthesis. Oxidoreductase; part of the gene cluster B that mediates the biosynthesis of botcinic acid and its botcinin derivatives, acetate-derived polyketides that contribute to virulence when combined with the sesquiterpene botrydial. Botcinic acid and its derivatives have been shown to induce chlorosis and necrosis during host plant infection, but also have antifungal activities. Two polyketide synthases, BOA6 and BOA9, are involved in the biosynthesis of botcinins. BOA6 mediates the formation of the per-methylated tetraketide core by condensation of four units of malonyl-CoA with one unit of acetyl-CoA, which would be methylated in activated methylene groups to yield a bicyclic acid intermediate that could then either be converted to botrylactone derivatives or lose the starter acetate unit through a retro-Claisen type C-C bond cleavage to yield botcinin derivatives. The second polyketide synthase, BOA9, is probably required for the biosynthesis of the tetraketide side chain of botcinins. The methyltransferase (MT) domain within BOA6 is probably responsible for the incorporation of four methyl groups. The trans-enoyl reductase BOA5 might take over the enoyl reductase function of BOA6 that misses an ER domain. The monooxygenases BOA2, BOA3 and BOA4 might be involved in further hydroxylations at C4, C5 and C8, whereas BOA7, close to BOA9, could potentially be involved in the hydroxylation at C4 in the side chain of botcinins. The sequence is that of Oxidoreductase BOA17 from Botryotinia fuckeliana (strain B05.10) (Noble rot fungus).